A 329-amino-acid chain; its full sequence is MDAIDFVKKNTEEIVTMDEAFKALNNNPKGYIGFEPSGNPHLGTCLLLANKINDMVNAGIKMTVLLADWHAMVNDKLNGDLNEIRKSGELFKRAWLAAGLNSNVKFVWASELVEKSDYWSLLLKVAKNASLLRIRRSLPIMGRSEEDADRDFSKYIYPLMQVTDIFYLDVDFALGGMDQRHAHMLARDIAERMNIKKPVSVHTPLLSSLKGSGRMDSFKKMSKSEPDSAIFMTDSNDDIKRKIKNAYCPMKEVNGNPVIDILKYIIFPYYNDKISIKRPESKGGPVDVDMDSLTRMYISGEIHPVDLKNAVGELLCDIIGPVREKLTGD.

L-tyrosine-binding residues include tyrosine 31, tyrosine 157, glutamine 161, aspartate 164, and glutamine 179. Positions 220-224 match the 'KMSKS' region motif; the sequence is KMSKS. Lysine 223 provides a ligand contact to ATP.

It belongs to the class-I aminoacyl-tRNA synthetase family. TyrS type 4 subfamily. As to quaternary structure, homodimer.

It is found in the cytoplasm. The enzyme catalyses tRNA(Tyr) + L-tyrosine + ATP = L-tyrosyl-tRNA(Tyr) + AMP + diphosphate + H(+). Its function is as follows. Catalyzes the attachment of tyrosine to tRNA(Tyr) in a two-step reaction: tyrosine is first activated by ATP to form Tyr-AMP and then transferred to the acceptor end of tRNA(Tyr). The sequence is that of Tyrosine--tRNA ligase from Picrophilus torridus (strain ATCC 700027 / DSM 9790 / JCM 10055 / NBRC 100828 / KAW 2/3).